The primary structure comprises 807 residues: Leucine--tRNA ligase (807 aa).

A 'HIGH' region motif is present at residues 38-49 (PYPSGSGLHVGH). Positions 579 to 583 (KMSKS) match the 'KMSKS' region motif. Residue lysine 582 coordinates ATP.

This sequence belongs to the class-I aminoacyl-tRNA synthetase family.

Its subcellular location is the cytoplasm. The catalysed reaction is tRNA(Leu) + L-leucine + ATP = L-leucyl-tRNA(Leu) + AMP + diphosphate. The sequence is that of Leucine--tRNA ligase from Mycoplasmopsis pulmonis (strain UAB CTIP) (Mycoplasma pulmonis).